Consider the following 562-residue polypeptide: Arginine--tRNA ligase (562 aa).

Residues Pro-122–His-132 carry the 'HIGH' region motif.

Belongs to the class-I aminoacyl-tRNA synthetase family. Monomer.

It is found in the cytoplasm. The catalysed reaction is tRNA(Arg) + L-arginine + ATP = L-arginyl-tRNA(Arg) + AMP + diphosphate. The sequence is that of Arginine--tRNA ligase from Chlamydia felis (strain Fe/C-56) (Chlamydophila felis).